The primary structure comprises 214 residues: tRNA (guanine-N(7)-)-methyltransferase (214 aa).

Glutamate 44, glutamate 69, aspartate 96, and aspartate 118 together coordinate S-adenosyl-L-methionine. The active site involves aspartate 118. Residue lysine 122 coordinates substrate. An interaction with RNA region spans residues 124–129 (RHEKRR). Residues aspartate 154 and 192 to 195 (TEYE) each bind substrate.

It belongs to the class I-like SAM-binding methyltransferase superfamily. TrmB family.

It carries out the reaction guanosine(46) in tRNA + S-adenosyl-L-methionine = N(7)-methylguanosine(46) in tRNA + S-adenosyl-L-homocysteine. It participates in tRNA modification; N(7)-methylguanine-tRNA biosynthesis. Its function is as follows. Catalyzes the formation of N(7)-methylguanine at position 46 (m7G46) in tRNA. The chain is tRNA (guanine-N(7)-)-methyltransferase from Lactiplantibacillus plantarum (strain ATCC BAA-793 / NCIMB 8826 / WCFS1) (Lactobacillus plantarum).